The following is a 368-amino-acid chain: GTPase Obg (368 aa).

An Obg domain is found at 1–161; that stretch reads MRFVDEATIT…RSLRLELKIL (161 aa). The OBG-type G domain maps to 162–337; that stretch reads ADAGLLGLPN…VVAEMWRMRD (176 aa). GTP contacts are provided by residues 168–175, 193–197, 217–220, 290–293, and 318–320; these read GLPNAGKS, FTTLI, DIPG, NKID, and SAL. Mg(2+) contacts are provided by S175 and T195.

It belongs to the TRAFAC class OBG-HflX-like GTPase superfamily. OBG GTPase family. In terms of assembly, monomer. Mg(2+) is required as a cofactor.

The protein localises to the cytoplasm. In terms of biological role, an essential GTPase which binds GTP, GDP and possibly (p)ppGpp with moderate affinity, with high nucleotide exchange rates and a fairly low GTP hydrolysis rate. Plays a role in control of the cell cycle, stress response, ribosome biogenesis and in those bacteria that undergo differentiation, in morphogenesis control. This Nitratidesulfovibrio vulgaris (strain DSM 19637 / Miyazaki F) (Desulfovibrio vulgaris) protein is GTPase Obg.